Here is a 244-residue protein sequence, read N- to C-terminus: Thaumatin-like protein 1 (244 aa).

A signal peptide spans 1–22 (MKFEALIGLVLVFLSEHAGVYS). Cystine bridges form between C31–C243, C79–C89, C94–C101, C149–C232, C154–C215, C162–C178, C182–C191, and C192–C202. N-linked (GlcNAc...) asparagine glycosylation occurs at N150.

The protein belongs to the thaumatin family. In terms of processing, N-glycosylated. In terms of tissue distribution, style.

Its subcellular location is the secreted. This is Thaumatin-like protein 1 (TL1) from Pyrus pyrifolia (Chinese pear).